A 529-amino-acid polypeptide reads, in one-letter code: Polygalacturonase (529 aa).

A signal peptide spans 1–21 (MNHRYTLLALAAAALSAGAHA). D305 (proton donor) is an active-site residue. H331 is an active-site residue. A required for PGA export across the outer membrane and catalytic activity region spans residues 516–529 (AFVPLKSVAPTSPI).

It belongs to the glycosyl hydrolase 28 family. As to quaternary structure, monomer.

The protein localises to the secreted. The catalysed reaction is (1,4-alpha-D-galacturonosyl)n+m + H2O = (1,4-alpha-D-galacturonosyl)n + (1,4-alpha-D-galacturonosyl)m.. Functionally, contributes to the wilt disease production on tomato. The protein is Polygalacturonase (pglA) of Ralstonia solanacearum (Pseudomonas solanacearum).